The sequence spans 1290 residues: Sorbin and SH3 domain-containing protein 1 (1290 aa).

Disordered regions lie at residues 1–211 (MSSE…LSDV), 238–271 (HKLN…SKSE), and 286–313 (TLPL…KKVD). Over residues 45–61 (SSSYRGTPSSSPVSPQE) the composition is skewed to low complexity. At Thr51 the chain carries Phosphothreonine. 3 positions are modified to phosphoserine: Ser55, Ser58, and Ser62. Residues 62–71 (SPKHESKSGL) are compositionally biased toward basic and acidic residues. 2 stretches are compositionally biased toward polar residues: residues 83–95 (LSSS…NAQP) and 123–153 (EVSS…TIVN). The segment covering 161-173 (HNRDPASERRAGE) has biased composition (basic and acidic residues). Residues Asp164 and Asp175 each carry the phosphoserine modification. The residue at position 179 (Thr179) is a Phosphothreonine. A phosphoserine mark is found at Ser185, Ala194, Ser204, Ser209, Ser254, Ser261, Ser270, and Pro288. A compositionally biased stretch (basic and acidic residues) spans 189 to 199 (ASERRAKDASR). Residues 202-247 (VRSAQDLSDVSTDEVGIPLRNTERSKDWYKTMFKQIHKLNRDDDSD) enclose the SoHo domain. Positions 240 to 260 (LNRDDDSDVHSPRYSFSDDTK) are enriched in basic and acidic residues. Basic and acidic residues predominate over residues 299 to 313 (SPERNDWEPLDKKVD). Tyr325 is modified (phosphotyrosine; by ABL1). A phosphoserine mark is found at Ser345, Pro346, Tyr357, Ser376, and Ser407. The disordered stretch occupies residues 389–416 (VETVNKSPSANSPQSSAVSPTPDITSEP). Residues 392–412 (VNKSPSANSPQSSAVSPTPDI) show a composition bias toward polar residues. Tyr421 bears the Phosphotyrosine; by ABL1 mark. Ser432 and Ser470 each carry phosphoserine. Disordered regions lie at residues 463-482 (LSGL…RKGG), 588-607 (YDSK…SSRR), 697-739 (SLDF…EMDG), 783-803 (VSND…PKHR), 822-841 (RKHE…SRGD), and 862-972 (PLQQ…SPRH). Residue Thr475 is modified to Phosphothreonine. 2 stretches are compositionally biased toward polar residues: residues 595–606 (TMSLQEYGTSSR) and 704–722 (LSKS…SARS). At Ser969 the chain carries Phosphoserine. SH3 domains follow at residues 1049–1108 (LEMR…LLPP) and 1123–1184 (LEYG…VLKR). At Thr1189 the chain carries Phosphothreonine. A phosphotyrosine mark is found at Tyr1193 and Tyr1198. Positions 1198–1210 (YSSSPSRSATVSP) are enriched in low complexity. The interval 1198-1227 (YSSSPSRSATVSPQQPQAQQRRVTPDRSQP) is disordered. Phosphoserine is present on residues Ser1201 and Ser1209. Residues 1211–1227 (QQPQAQQRRVTPDRSQP) are compositionally biased toward polar residues. The 62-residue stretch at 1229–1290 (LDLCSYQALY…PGNYVKPLYL (62 aa)) folds into the SH3 3 domain. Tyr1238 carries the post-translational modification Phosphotyrosine; by ABL1.

As to quaternary structure, interacts (via SH3 domain 2) with PXN. Interacts with the long isoform of AFDN and with VCL. AFDN and VCL bind to SORBS1 in a competitive manner and do not form a ternary complex. Interacts with ABL1, CBL, CBLB and INPPL1/SHIP2 through the third SH3 domain. Interaction with ABL1 occurs only after insulin stimulation while this has no effect on the interaction with INPPL1. Interacts with the insulin receptor but dissociates from it following insulin stimulation. Also interacts with SCA7, PTK2/FAK1 and flotillin. Interacts (via third SH3 domain) with the Ten-1 ICD form of TENM1; the interaction induces the translocation of SORBS1 to the nucleus. Interacts with INSM1. Post-translationally, O-glycosylated. In terms of tissue distribution, expressed in all tissues tested: heart, brain, spleen, lung, liver, muscle, kidney and testis. Expressed in 3T3-L1 adipocytes but not in 3T3-L1 fibroblasts.

The protein resides in the cell junction. It is found in the adherens junction. The protein localises to the cell membrane. It localises to the cytoplasm. Its subcellular location is the cytoskeleton. The protein resides in the focal adhesion. It is found in the nucleus. The protein localises to the nucleus matrix. Functionally, plays a role in tyrosine phosphorylation of CBL by linking CBL to the insulin receptor. Required for insulin-stimulated glucose transport. Involved in formation of actin stress fibers and focal adhesions. This Mus musculus (Mouse) protein is Sorbin and SH3 domain-containing protein 1.